Reading from the N-terminus, the 249-residue chain is MTRIDLNSDLGESFGRYTIGNDDQVLDLITAANVACGFHAGDPDVMAQTVALAETKGVAIGAHPGFPDLGGFGRRKLDMTPAEVKNMVTYQVSALMGFTKDHRLHHVKPHGALYNAAAKDLALARAICEGVAQVDDQLPLYGLAGSQLLEAAKEVGLPAYSEVFADRGYQADGSLVPRSQPNAVLTDPLAVAERALSMVQTQSVTAVTGETVPLKVDTICVHGDNQAALALVDQLRQTFTANGITIQAC.

The protein belongs to the LamB/PxpA family. Forms a complex composed of PxpA, PxpB and PxpC.

The enzyme catalyses 5-oxo-L-proline + ATP + 2 H2O = L-glutamate + ADP + phosphate + H(+). In terms of biological role, catalyzes the cleavage of 5-oxoproline to form L-glutamate coupled to the hydrolysis of ATP to ADP and inorganic phosphate. The protein is 5-oxoprolinase subunit A of Limosilactobacillus fermentum (strain NBRC 3956 / LMG 18251) (Lactobacillus fermentum).